Reading from the N-terminus, the 334-residue chain is Protein-methionine-sulfoxide reductase catalytic subunit MsrP (334 aa).

Residues 1-44 (MKKNQFLKESDVTAESVFFMKRRQVLKALGISAAALSLPHAAHA) constitute a signal peptide (tat-type signal). Residues asparagine 88, 91-92 (YE), cysteine 146, threonine 181, asparagine 233, arginine 238, and 249-251 (GIK) each bind Mo-molybdopterin.

The protein belongs to the MsrP family. Heterodimer of a catalytic subunit (MsrP) and a heme-binding subunit (MsrQ). The cofactor is Mo-molybdopterin. Predicted to be exported by the Tat system. The position of the signal peptide cleavage has not been experimentally proven.

Its subcellular location is the periplasm. The enzyme catalyses L-methionyl-[protein] + a quinone + H2O = L-methionyl-(S)-S-oxide-[protein] + a quinol. It carries out the reaction L-methionyl-[protein] + a quinone + H2O = L-methionyl-(R)-S-oxide-[protein] + a quinol. Functionally, part of the MsrPQ system that repairs oxidized periplasmic proteins containing methionine sulfoxide residues (Met-O), using respiratory chain electrons. Thus protects these proteins from oxidative-stress damage caused by reactive species of oxygen and chlorine generated by the host defense mechanisms. MsrPQ is essential for the maintenance of envelope integrity under bleach stress, rescuing a wide series of structurally unrelated periplasmic proteins from methionine oxidation, including the primary periplasmic chaperone SurA and the lipoprotein Pal. The catalytic subunit MsrP is non-stereospecific, being able to reduce both (R-) and (S-) diastereoisomers of methionine sulfoxide. In Escherichia coli O17:K52:H18 (strain UMN026 / ExPEC), this protein is Protein-methionine-sulfoxide reductase catalytic subunit MsrP.